We begin with the raw amino-acid sequence, 841 residues long: MDGLCYVIFIIFSLLSCAFSPLSYASPATFSRRHLLQAPVTDPSTFSPPFFPLYSSTSPPPPPSPPQPLPPPAPTFATFPANISALVLPRSPKPQTPSRTLLIPAISAVLAAATLIALAFFFYGRWRGQTSHFKDESKSLASDISQSQQQTLPCPPPRNNNTQNKLSVAPSTSDVLYLGNVVTSSGSGFVKPESPDISPLPPLPARSFLLQHHSEANLDEEEEDDDFYSPLASIAGQESRDRRINPYSNCSCSISSHSDSPAMSPSAAMSPPMNSTAPHWSTNQNTHSPSSPERTVRNNKRYGGQSLRMFSLWNQNLGFPRISSASTSPERGMIRTPDAYARSSMYSSVSTTPDRFFRKVLDSSPPRWNDFSRNVKSLFLSSTSASPARDFCINISESSRSLKSSWEKPELDTTQQRESAAAAVTLPPPQRPPPAMPEPPPLVPPSQSFMVQKSGKKLSFSELPQSCGEGTTDRPKPKLKPLPWDKVRPSSRRTNTWDRLPYNSSNANSKQRSLSCDLPMLNQESKVLDPRKSQNVAVLLTTLKLTTNDVCQALRDGHYDALGVELLESLARVAPSEEEEKKLISYSDDSVIKLAPSERFLKELLNVPFVFKRVDALLSVASFDSKVKHLKRSFSVIQAACEALRNSRMLLRLVGATLEAGMKSGNAHDFKLEALLGLVDIKSSDGRTSILDSVVQKITESEGIKGLQVVRNLSSVLNDAKKSAELDYGVVRMNVSKLYEEVQKISEVLRLCEETGHSEEHQWWKFRESVTRFLETAAEEIKKIEREEGSTLFAVKKITEYFHVDPAKEEAQLLKVFVIVRDFLKILEGVCKKMEVTSSLA.

A signal peptide spans 1–25 (MDGLCYVIFIIFSLLSCAFSPLSYA). Residues 102–122 (LIPAISAVLAAATLIALAFFF) form a helical membrane-spanning segment. Disordered regions lie at residues 137 to 166 (SKSLASDISQSQQQTLPCPPPRNNNTQNKL), 254 to 297 (ISSH…RTVR), and 403 to 512 (KSSW…SKQR). Positions 139–152 (SLASDISQSQQQTL) are enriched in polar residues. Low complexity predominate over residues 254–278 (ISSHSDSPAMSPSAAMSPPMNSTAP). Over residues 279–293 (HWSTNQNTHSPSSPE) the composition is skewed to polar residues. Pro residues predominate over residues 426–444 (LPPPQRPPPAMPEPPPLVP). Residues 469–841 (EGTTDRPKPK…KKMEVTSSLA (373 aa)) form the FH2 domain. Polar residues predominate over residues 502–512 (YNSSNANSKQR).

This sequence belongs to the formin-like family. Class-I subfamily.

The protein resides in the membrane. Might be involved in the organization and polarity of the actin cytoskeleton. The chain is Formin-like protein 10 (FH10) from Arabidopsis thaliana (Mouse-ear cress).